We begin with the raw amino-acid sequence, 175 residues long: Gamma-crystallin B (175 aa).

2 consecutive Beta/gamma crystallin 'Greek key' domains span residues 2–40 (GKIT…RVDS) and 41–83 (GCWM…CLIP). The tract at residues 84 to 88 (QHSGT) is connecting peptide. Beta/gamma crystallin 'Greek key' domains follow at residues 89–129 (YRMR…NVME) and 130–172 (GCWV…RRVM).

This sequence belongs to the beta/gamma-crystallin family.

Crystallins are the dominant structural components of the vertebrate eye lens. The protein is Gamma-crystallin B (Crygb) of Mus musculus (Mouse).